A 129-amino-acid polypeptide reads, in one-letter code: Lysozyme C (129 aa).

Residues lysine 1–leucine 129 enclose the C-type lysozyme domain. 4 disulfides stabilise this stretch: cysteine 6–cysteine 127, cysteine 30–cysteine 115, cysteine 64–cysteine 80, and cysteine 76–cysteine 94. Catalysis depends on residues glutamate 35 and aspartate 52.

Belongs to the glycosyl hydrolase 22 family. In terms of assembly, monomer.

The protein localises to the secreted. It catalyses the reaction Hydrolysis of (1-&gt;4)-beta-linkages between N-acetylmuramic acid and N-acetyl-D-glucosamine residues in a peptidoglycan and between N-acetyl-D-glucosamine residues in chitodextrins.. In terms of biological role, lysozymes have primarily a bacteriolytic function; those in tissues and body fluids are associated with the monocyte-macrophage system and enhance the activity of immunoagents. The sequence is that of Lysozyme C (LYZ) from Callipepla californica (California quail).